The chain runs to 492 residues: GDP-Man:Man(3)GlcNAc(2)-PP-Dol alpha-1,2-mannosyltransferase (492 aa).

At 1–19 the chain is on the lumenal side; the sequence is MAADTGSWCVYAVLRFFYS. Residues 20–40 form a helical membrane-spanning segment; that stretch reads LFFPGLMICGVLCVYLVIGLW. The Cytoplasmic segment spans residues 41–233; that stretch reads VIRWHLQRKK…SRNALLSKAK (193 aa). An intramembrane region (helical) is located at residues 234–254; it reads LIYYYLFAFVYGLVGSCSDIV. The Cytoplasmic portion of the chain corresponds to 255–399; it reads MVNSSWTLNH…IGLHTMWNEH (145 aa). Residues 400–420 constitute an intramembrane region (helical); that stretch reads FGIGVVECMAAGTVILAHNSG. Residues 421-492 are Cytoplasmic-facing; sequence GPKLDIVIPH…FLCSMEKLLT (72 aa).

Belongs to the glycosyltransferase group 1 family. Glycosyltransferase 4 subfamily.

The protein resides in the endoplasmic reticulum membrane. It catalyses the reaction an alpha-D-Man-(1-&gt;3)-[alpha-D-Man-(1-&gt;6)]-beta-D-Man-(1-&gt;4)-beta-D-GlcNAc-(1-&gt;4)-alpha-D-GlcNAc-diphospho-di-trans,poly-cis-dolichol + 2 GDP-alpha-D-mannose = an alpha-D-Man-(1-&gt;2)-alpha-D-Man-(1-&gt;2)-alpha-D-Man-(1-&gt;3)-[alpha-D-Man-(1-&gt;6)]-beta-D-Man-(1-&gt;4)-beta-D-GlcNAc-(1-&gt;4)-alpha-D-GlcNAc-diphospho-di-trans,poly-cis-dolichol + 2 GDP + 2 H(+). It functions in the pathway protein modification; protein glycosylation. Its function is as follows. GDP-Man:Man(3)GlcNAc(2)-PP-Dol alpha-1,2-mannosyltransferase that operates in the biosynthetic pathway of dolichol-linked oligosaccharides, the glycan precursors employed in protein asparagine (N)-glycosylation. The assembly of dolichol-linked oligosaccharides begins on the cytosolic side of the endoplasmic reticulum membrane and finishes in its lumen. The sequential addition of sugars to dolichol pyrophosphate produces dolichol-linked oligosaccharides containing fourteen sugars, including two GlcNAcs, nine mannoses and three glucoses. Once assembled, the oligosaccharide is transferred from the lipid to nascent proteins by oligosaccharyltransferases. Catalyzes, on the cytoplasmic face of the endoplasmic reticulum, the addition of the fourth and fifth mannose residues to the dolichol-linked oligosaccharide chain, to produce Man(5)GlcNAc(2)-PP-dolichol core oligosaccharide. Man(5)GlcNAc(2)-PP-dolichol is a substrate for ALG3, the following enzyme in the biosynthetic pathway. This is GDP-Man:Man(3)GlcNAc(2)-PP-Dol alpha-1,2-mannosyltransferase from Mus musculus (Mouse).